Here is a 597-residue protein sequence, read N- to C-terminus: Centrosomal protein of 70 kDa (597 aa).

Residues 1–24 (MFPVAPKPQDSNQPSDRLMTEKQQ) form a disordered region. 2 coiled-coil regions span residues 66-179 (MRQN…QTEV) and 254-320 (TYKG…QELI). The TPR repeat unit spans residues 483 to 516 (NGVYPRMNEVYTRLGEMNNAVRNLQELLELDSSS).

As to quaternary structure, directly interacts with tubulin-gamma; this interaction determines centrosomal localization.

Its subcellular location is the cytoplasm. It localises to the cytoskeleton. The protein resides in the microtubule organizing center. The protein localises to the centrosome. In terms of biological role, plays a role in the organization of both preexisting and nascent microtubules in interphase cells. During mitosis, required for the organization and orientation of the mitotic spindle. This is Centrosomal protein of 70 kDa (CEP70) from Macaca fascicularis (Crab-eating macaque).